We begin with the raw amino-acid sequence, 374 residues long: Serpin B8 (374 aa).

It belongs to the serpin family. Ov-serpin subfamily.

It localises to the cytoplasm. Functionally, has an important role in epithelial desmosome-mediated cell-cell adhesion. In Bos taurus (Bovine), this protein is Serpin B8 (SERPINB8).